The chain runs to 200 residues: Transcriptional repressor NrdR (200 aa).

A zinc finger spans residues 3 to 34 (CPRCGKQEIRVLESRSAEGGQSVRRRRECMSC). Positions 49 to 139 (IMVIKRDGSR…VYRKFQGIKD (91 aa)) constitute an ATP-cone domain. Residues 158 to 200 (LERPLRNSPPSESESTASPDWVGGIPQLLDQNDTSSNLSEIPK) are disordered. The span at 186-200 (LDQNDTSSNLSEIPK) shows a compositional bias: polar residues.

It belongs to the NrdR family. The cofactor is Zn(2+).

Negatively regulates transcription of bacterial ribonucleotide reductase nrd genes and operons by binding to NrdR-boxes. The polypeptide is Transcriptional repressor NrdR (Synechococcus sp. (strain JA-3-3Ab) (Cyanobacteria bacterium Yellowstone A-Prime)).